The chain runs to 294 residues: Metallophosphoesterase MPPED2 (294 aa).

Mn(2+)-binding residues include D65, H67, D86, N117, and H213. Position 117-118 (117-118 (NH)) interacts with GMP. GMP is bound by residues 225–226 (KE) and 252–255 (GIHE). H254 serves as a coordination point for Mn(2+).

This sequence belongs to the UPF0046 family. As to quaternary structure, homodimer. Mn(2+) serves as cofactor. Co(2+) is required as a cofactor. As to expression, expressed predominantly in fetal brain.

With respect to regulation, inhibited by nmolar levels of AMP and GMP. Its function is as follows. Displays low metallophosphoesterase activity (in vitro). May play a role in the development of the nervous system. The polypeptide is Metallophosphoesterase MPPED2 (MPPED2) (Homo sapiens (Human)).